A 283-amino-acid chain; its full sequence is MQKLVAFWQLMRADRPIGTYLLAWPTIWALMIAGAGEPPLRIVVIFLLGTFVMRSAGCVINDFADRNYDGHVRRTRQRPIPAGRISATEAMIGFIALLAIAFGLVMQLNTETVMLSFFAAGVAALYPFCKRWTHLPQIVLGIAFSFGIPMAFTALESDQWFIAGLLFLANILWTVAYDTEYAMADREDDLKIGLQSTAILFGRFDRLAIGLLQLATLALLGWILHLITVELWVWLALAAIFLLFAYQHWLIRHREPGKCFQAFLHNHYIGMVFAIGLAVHYWF.

9 helical membrane passes run 16–36, 40–60, 85–105, 108–128, 135–155, 160–180, 204–224, 226–246, and 263–283; these read PIGTYLLAWPTIWALMIAGAG, LRIVVIFLLGTFVMRSAGCVI, ISATEAMIGFIALLAIAFGLV, LNTETVMLSFFAAGVAALYPF, LPQIVLGIAFSFGIPMAFTAL, WFIAGLLFLANILWTVAYDTE, FDRLAIGLLQLATLALLGWIL, LITVELWVWLALAAIFLLFAY, and FLHNHYIGMVFAIGLAVHYWF.

This sequence belongs to the UbiA prenyltransferase family. Mg(2+) is required as a cofactor.

It is found in the cell inner membrane. It catalyses the reaction all-trans-octaprenyl diphosphate + 4-hydroxybenzoate = 4-hydroxy-3-(all-trans-octaprenyl)benzoate + diphosphate. Its pathway is cofactor biosynthesis; ubiquinone biosynthesis. Its function is as follows. Catalyzes the prenylation of para-hydroxybenzoate (PHB) with an all-trans polyprenyl group. Mediates the second step in the final reaction sequence of ubiquinone-8 (UQ-8) biosynthesis, which is the condensation of the polyisoprenoid side chain with PHB, generating the first membrane-bound Q intermediate 3-octaprenyl-4-hydroxybenzoate. The protein is 4-hydroxybenzoate octaprenyltransferase of Idiomarina loihiensis (strain ATCC BAA-735 / DSM 15497 / L2-TR).